The following is a 907-amino-acid chain: Translation initiation factor IF-2 (907 aa).

Positions 26–317 (DAGMKKSSSD…KPKSMQHGFD (292 aa)) are disordered. 2 stretches are compositionally biased toward basic and acidic residues: residues 28-44 (GMKKSSSDQVSDEEKQK) and 101-248 (SAIE…DTDY). The span at 299–308 (KGGRKGKLSK) shows a compositional bias: basic residues. Residues 406–575 (PRAPVVTIMG…LLQAEVLELT (170 aa)) form the tr-type G domain. Positions 415–422 (GHVDHGKT) are G1. 415 to 422 (GHVDHGKT) provides a ligand contact to GTP. The segment at 440–444 (GITQH) is G2. The segment at 461-464 (DTPG) is G3. Residues 461–465 (DTPGH) and 515–518 (NKID) contribute to the GTP site. The tract at residues 515-518 (NKID) is G4. Residues 551–553 (SAK) form a G5 region.

The protein belongs to the TRAFAC class translation factor GTPase superfamily. Classic translation factor GTPase family. IF-2 subfamily.

The protein localises to the cytoplasm. In terms of biological role, one of the essential components for the initiation of protein synthesis. Protects formylmethionyl-tRNA from spontaneous hydrolysis and promotes its binding to the 30S ribosomal subunits. Also involved in the hydrolysis of GTP during the formation of the 70S ribosomal complex. The sequence is that of Translation initiation factor IF-2 from Vibrio vulnificus (strain YJ016).